Consider the following 229-residue polypeptide: Zinc finger matrin-type protein 4 (229 aa).

4 Matrin-type zinc fingers span residues S14–L44, D72–L106, R145–R175, and Y198–N228.

Its subcellular location is the nucleus. This Mus musculus (Mouse) protein is Zinc finger matrin-type protein 4 (Zmat4).